We begin with the raw amino-acid sequence, 119 residues long: Bombesin (119 aa).

The first 29 residues, 1–29 (MSAIPLNRILPLGFLFHLLIFSFISLSSC), serve as a signal peptide directing secretion. A propeptide spanning residues 30–44 (MEFVEDPNNQGRISL) is cleaved from the precursor. M58 bears the Methionine amide mark. Residues 62–119 (SLQDTDFEEMESFAKRNVENMRAALLQEQNRAESERELRHAQLVVRNILEQYLKNMQN) constitute a propeptide that is removed on maturation.

The protein belongs to the bombesin/neuromedin-B/ranatensin family. In terms of tissue distribution, localized to the cutaneous granular glands in the skin and the brain.

The protein localises to the secreted. Stimulates smooth muscle contraction. Role in induction of hypothermia, stimulation of DNA replication and release of many gastrointestinal hormones. This chain is Bombesin, found in Bombina orientalis (Oriental fire-bellied toad).